Here is a 563-residue protein sequence, read N- to C-terminus: Nicalin (563 aa).

The N-terminal stretch at 1 to 29 is a signal peptide; it reads MQDEIIDFFRSPALLFYMTLMLTICVVNG. Over 30 to 522 the chain is Lumenal; it reads SQQVGEVVET…NRLVAERVKP (493 aa). A glycan (N-linked (GlcNAc...) asparagine) is linked at asparagine 232. Residues 523-543 traverse the membrane as a helical segment; it reads AVFELVIAAGVFTYLSAFYYI. The Cytoplasmic segment spans residues 544–563; sequence ATHSQNTIEGTVAAIRKSIF.

The protein belongs to the nicastrin family. May interact with the levamisole-sensitive nicotinic acetylcholine receptor (L-AChR). May interact with nra-4 in the ER. Expressed in body wall, pharyngeal, and vulval muscles, excretory canal cell, head and motor neurons, and vulval epithelium.

It is found in the endoplasmic reticulum membrane. Involved in the recognition and selection of protein complexes to exit the endoplasmic reticulum (ER). In muscles, regulates levamisole-sensitive nicotinic acetylcholine receptor (L-AChR) subunit composition, possibly by allowing only specific L-AChR subunit combinations to exit the ER. Specifically, may promote the inclusion of alpha subunits unc-38 and unc-29 into L-AChR. Regulates L-AChR sensitivity to agonists such as nicotine and levamisole at neuro-muscular junctions. In touch neurons, may prevent ER exit of incorrectly folded mec-4-mec-10 ion channel. This Caenorhabditis elegans protein is Nicalin.